The chain runs to 616 residues: Alpha terpineol synthase, chloroplastic (616 aa).

A chloroplast-targeting transit peptide spans 1 to 41 (MALLSVAPLQKPLTSCSPFSTTMPTLGVCTPRKVVTPSIIM). The Mg(2+) site is built by D367, D371, and D519. The DDXXD motif motif lies at 367-371 (DDIYD).

The protein belongs to the terpene synthase family. Tpsd subfamily. The cofactor is Mg(2+). Mn(2+) serves as cofactor.

It localises to the plastid. Its subcellular location is the chloroplast. The enzyme catalyses (2E)-geranyl diphosphate + H2O = (S)-alpha-terpineol + diphosphate. It carries out the reaction (2E)-geranyl diphosphate + H2O = 1,8-cineole + diphosphate. It catalyses the reaction (2E)-geranyl diphosphate = beta-myrcene + diphosphate. The catalysed reaction is (2E)-geranyl diphosphate = (1S,5S)-sabinene + diphosphate. It functions in the pathway terpene metabolism; oleoresin biosynthesis. Its pathway is secondary metabolite biosynthesis; terpenoid biosynthesis. Its function is as follows. Monoterpene synthase (TPS) involved in the biosynthesis of monoterpene natural products included in conifer oleoresin secretions and volatile emissions; these compounds contribute to biotic and abiotic stress defense against herbivores and pathogens. Catalyzes the conversion of (2E)-geranyl diphosphate (GPP) to alpha-terpineol and, to a lower extent, to 1,8-cineole, myrcene and (-)-sabinene. The protein is Alpha terpineol synthase, chloroplastic of Pinus contorta (Shore pine).